Reading from the N-terminus, the 427-residue chain is Flotillin-1 (427 aa).

A phosphoserine mark is found at serine 19, serine 163, and serine 385. Threonine 387 is subject to Phosphothreonine.

The protein belongs to the band 7/mec-2 family. Flotillin subfamily. In terms of assembly, heterooligomeric complex of flotillin-1 and flotillin-2 and caveolin-1 and caveolin-2. Interacts with ECPAS.

Its subcellular location is the cell membrane. The protein resides in the endosome. It localises to the membrane. The protein localises to the caveola. It is found in the melanosome. Its subcellular location is the membrane raft. Functionally, may act as a scaffolding protein within caveolar membranes, functionally participating in formation of caveolae or caveolae-like vesicles. The protein is Flotillin-1 (FLOT1) of Homo sapiens (Human).